A 313-amino-acid chain; its full sequence is Formimidoylglutamase (313 aa).

Residues histidine 130, aspartate 155, histidine 157, aspartate 159, aspartate 241, and aspartate 243 each contribute to the Mn(2+) site.

This sequence belongs to the arginase family. Requires Mn(2+) as cofactor.

It carries out the reaction N-formimidoyl-L-glutamate + H2O = formamide + L-glutamate. It participates in amino-acid degradation; L-histidine degradation into L-glutamate; L-glutamate from N-formimidoyl-L-glutamate (hydrolase route): step 1/1. Its function is as follows. Catalyzes the conversion of N-formimidoyl-L-glutamate to L-glutamate and formamide. The protein is Formimidoylglutamase of Salmonella schwarzengrund (strain CVM19633).